The sequence spans 117 residues: Large ribosomal subunit protein uL22 (117 aa).

It belongs to the universal ribosomal protein uL22 family. As to quaternary structure, part of the 50S ribosomal subunit.

Functionally, this protein binds specifically to 23S rRNA; its binding is stimulated by other ribosomal proteins, e.g. L4, L17, and L20. It is important during the early stages of 50S assembly. It makes multiple contacts with different domains of the 23S rRNA in the assembled 50S subunit and ribosome. In terms of biological role, the globular domain of the protein is located near the polypeptide exit tunnel on the outside of the subunit, while an extended beta-hairpin is found that lines the wall of the exit tunnel in the center of the 70S ribosome. This is Large ribosomal subunit protein uL22 from Lactobacillus gasseri (strain ATCC 33323 / DSM 20243 / BCRC 14619 / CIP 102991 / JCM 1131 / KCTC 3163 / NCIMB 11718 / NCTC 13722 / AM63).